A 447-amino-acid chain; its full sequence is Multicopper oxidase mco (447 aa).

A compositionally biased stretch (basic and acidic residues) spans 1–25 (MMDMKENDQKRNDMMDMKSHDERKN). Residues 1-43 (MMDMKENDQKRNDMMDMKSHDERKNLNSSQGKNEITFPKVLDP) form a disordered region. Positions 107, 109, 147, 149, 375, 378, 380, 428, 429, 430, 434, and 439 each coordinate Cu cation.

Belongs to the multicopper oxidase family. Cu cation serves as cofactor.

The protein resides in the cytoplasm. Its function is as follows. May be involved in copper homeostasis and oxidative stress response. Oxidizes the substrate 3,3'-dimethoxybenzidine in vitro. Also possesses low levels of phenoloxidase and ferroxidase activities. The polypeptide is Multicopper oxidase mco (mco) (Staphylococcus aureus).